We begin with the raw amino-acid sequence, 139 residues long: Putative pre-16S rRNA nuclease (139 aa).

Belongs to the YqgF nuclease family.

It is found in the cytoplasm. In terms of biological role, could be a nuclease involved in processing of the 5'-end of pre-16S rRNA. In Streptococcus thermophilus (strain ATCC BAA-491 / LMD-9), this protein is Putative pre-16S rRNA nuclease.